Reading from the N-terminus, the 603-residue chain is O-acetyltransferase OatA (603 aa).

Helical transmembrane passes span 17–37 (YLPG…IYHL), 45–65 (GFLG…SLLI), 87–107 (LIPA…IFKP), 148–168 (LWSL…ITFL), 177–197 (IIQT…VIHF), 211–231 (TRLQ…PFAL), 239–259 (IVVS…TLFF), 268–288 (IYNG…AIAV), 311–331 (YSLY…YVQG), 333–353 (IPVY…EISY), and 382–402 (VLVI…FDAL). Residues Ser-453, Asp-575, and His-578 contribute to the active site.

Belongs to the acyltransferase 3 family. As to quaternary structure, monomer.

It localises to the cell membrane. Its function is as follows. Responsible for O-acetylation at the C(6)-hydroxyl group of N-acetylmuramyl residues, forming the corresponding N,6-O-diacetylmuramic acid of the peptidoglycan. O-acetylation of the peptidoglycan is the major determinant for lysozyme resistance. This Staphylococcus aureus (strain NCTC 8325 / PS 47) protein is O-acetyltransferase OatA.